Here is a 134-residue protein sequence, read N- to C-terminus: Glycine cleavage system H protein (134 aa).

A Lipoyl-binding domain is found at threonine 24–glutamine 106. The residue at position 65 (lysine 65) is an N6-lipoyllysine.

The protein belongs to the GcvH family. The glycine cleavage system is composed of four proteins: P, T, L and H. (R)-lipoate is required as a cofactor.

In terms of biological role, the glycine cleavage system catalyzes the degradation of glycine. The H protein shuttles the methylamine group of glycine from the P protein to the T protein. This is Glycine cleavage system H protein from Mycobacterium tuberculosis (strain ATCC 25177 / H37Ra).